Here is a 217-residue protein sequence, read N- to C-terminus: MNQTLLSSFGTPFERVELALDALREGRGVMVLDDEDRENEGDMIFPAEIMTVEQMALTIRHGSGIVCLCITEDRRKQLDLPMMVENNTSAYGTGFTVTIEAAEGVTTGVSAADRVTTVRAAIKDGAKPSDLNRPGHVFPLRAQAGGVLTRGGHTEATIDLMTLAGFKPAGVLCELTNDDGTMARAPECIAFAGQHNMAVVTIEDLVAYRQAHERKAS.

Residues 37-38 (RE), aspartate 42, 150-154 (RGGHT), and glutamate 174 each bind D-ribulose 5-phosphate. Glutamate 38 provides a ligand contact to Mg(2+). Histidine 153 provides a ligand contact to Mg(2+).

This sequence belongs to the DHBP synthase family. In terms of assembly, homodimer. Requires Mg(2+) as cofactor. It depends on Mn(2+) as a cofactor.

It catalyses the reaction D-ribulose 5-phosphate = (2S)-2-hydroxy-3-oxobutyl phosphate + formate + H(+). Its pathway is cofactor biosynthesis; riboflavin biosynthesis; 2-hydroxy-3-oxobutyl phosphate from D-ribulose 5-phosphate: step 1/1. Catalyzes the conversion of D-ribulose 5-phosphate to formate and 3,4-dihydroxy-2-butanone 4-phosphate. The sequence is that of 3,4-dihydroxy-2-butanone 4-phosphate synthase from Salmonella paratyphi A (strain ATCC 9150 / SARB42).